The primary structure comprises 217 residues: Small ribosomal subunit protein uS3 (217 aa).

The KH type-2 domain maps to 40 to 110 (IRDLINKGFN…EVYINIHEVR (71 aa)).

It belongs to the universal ribosomal protein uS3 family. Part of the 30S ribosomal subunit. Forms a tight complex with proteins S10 and S14.

In terms of biological role, binds the lower part of the 30S subunit head. Binds mRNA in the 70S ribosome, positioning it for translation. This Rickettsia felis (strain ATCC VR-1525 / URRWXCal2) (Rickettsia azadi) protein is Small ribosomal subunit protein uS3.